The primary structure comprises 372 residues: UDP-N-acetylenolpyruvoylglucosamine reductase (372 aa).

Residues 29 to 205 enclose the FAD-binding PCMH-type domain; the sequence is VGPTARRLIT…LEVEFALDAS (177 aa). The active site involves Arg177. The Proton donor role is filled by Ser260. Glu364 is an active-site residue.

This sequence belongs to the MurB family. FAD serves as cofactor.

It localises to the cytoplasm. It carries out the reaction UDP-N-acetyl-alpha-D-muramate + NADP(+) = UDP-N-acetyl-3-O-(1-carboxyvinyl)-alpha-D-glucosamine + NADPH + H(+). The protein operates within cell wall biogenesis; peptidoglycan biosynthesis. Functionally, cell wall formation. The sequence is that of UDP-N-acetylenolpyruvoylglucosamine reductase from Mycobacterium avium (strain 104).